We begin with the raw amino-acid sequence, 188 residues long: Peptidyl-tRNA hydrolase (188 aa).

Tyr-14 contributes to the tRNA binding site. The Proton acceptor role is filled by His-19. 3 residues coordinate tRNA: Tyr-64, Asn-66, and Asn-112.

The protein belongs to the PTH family. Monomer.

The protein resides in the cytoplasm. It catalyses the reaction an N-acyl-L-alpha-aminoacyl-tRNA + H2O = an N-acyl-L-amino acid + a tRNA + H(+). Functionally, hydrolyzes ribosome-free peptidyl-tRNAs (with 1 or more amino acids incorporated), which drop off the ribosome during protein synthesis, or as a result of ribosome stalling. In terms of biological role, catalyzes the release of premature peptidyl moieties from peptidyl-tRNA molecules trapped in stalled 50S ribosomal subunits, and thus maintains levels of free tRNAs and 50S ribosomes. This is Peptidyl-tRNA hydrolase from Bacillus licheniformis (strain ATCC 14580 / DSM 13 / JCM 2505 / CCUG 7422 / NBRC 12200 / NCIMB 9375 / NCTC 10341 / NRRL NRS-1264 / Gibson 46).